The primary structure comprises 75 residues: Small ribosomal subunit protein bS16 (75 aa).

Belongs to the bacterial ribosomal protein bS16 family.

The protein is Small ribosomal subunit protein bS16 of Campylobacter jejuni subsp. jejuni serotype O:23/36 (strain 81-176).